The primary structure comprises 282 residues: tRNA pseudouridine synthase B (282 aa).

The active-site Nucleophile is aspartate 39.

Belongs to the pseudouridine synthase TruB family. Type 1 subfamily.

The enzyme catalyses uridine(55) in tRNA = pseudouridine(55) in tRNA. Its function is as follows. Responsible for synthesis of pseudouridine from uracil-55 in the psi GC loop of transfer RNAs. This Borreliella afzelii (strain PKo) (Borrelia afzelii) protein is tRNA pseudouridine synthase B.